The chain runs to 911 residues: Chitin synthase G (911 aa).

Disordered regions lie at residues 1 to 66 and 107 to 138; these read MAYQ…VSGY and GRVA…GGLR. Over residues 12–34 the composition is skewed to basic and acidic residues; sequence PHYDDNGHRLQDLPHGSYEEEAS. Positions 54–66 are enriched in polar residues; it reads QHGSSTTRPVSGY. The next 6 membrane-spanning stretches (helical) occupy residues 579-599, 624-644, 659-679, 711-731, 840-860, and 879-899; these read IFST…TTVI, IINT…FILA, SFVV…YLVV, IIII…FMYL, LVTF…SDGV, and ALLW…CWFL.

The protein belongs to the chitin synthase family. Class III subfamily.

It is found in the cell membrane. The catalysed reaction is [(1-&gt;4)-N-acetyl-beta-D-glucosaminyl](n) + UDP-N-acetyl-alpha-D-glucosamine = [(1-&gt;4)-N-acetyl-beta-D-glucosaminyl](n+1) + UDP + H(+). Polymerizes chitin, a structural polymer of the cell wall and septum, by transferring the sugar moiety of UDP-GlcNAc to the non-reducing end of the growing chitin polymer. In Aspergillus fumigatus (strain ATCC MYA-4609 / CBS 101355 / FGSC A1100 / Af293) (Neosartorya fumigata), this protein is Chitin synthase G (chsG).